The sequence spans 169 residues: Neudesin (169 aa).

An N-terminal signal peptide occupies residues 1 to 28 (MAGPAPGRRLVALALIVALAVGLPTAGA). The region spanning 41-126 (VRLFTEEELA…EELESLDDVF (86 aa)) is the Cytochrome b5 heme-binding domain. Lys-133 carries the N6-acetyllysine modification. A disordered region spans residues 148–169 (DGSPNLDFKPEDQPHFDIKDEF). The span at 155 to 169 (FKPEDQPHFDIKDEF) shows a compositional bias: basic and acidic residues.

It belongs to the cytochrome b5 family. MAPR subfamily. In terms of assembly, interacts with PINK1 and PARK7.

The protein resides in the secreted. The protein localises to the extracellular space. It is found in the mitochondrion. Its subcellular location is the endoplasmic reticulum. Functionally, acts as a neurotrophic factor in postnatal mature neurons enhancing neuronal survival. Promotes cell proliferation and neurogenesis in undifferentiated neural progenitor cells at the embryonic stage and inhibits differentiation of astrocytes. Its neurotrophic activity is exerted via MAPK1/ERK2, MAPK3/ERK1 and AKT1/AKT pathways. Neurotrophic activity is enhanced by binding to heme. Also acts as an anorexigenic neurotrophic factor that contributes to energy balance. The sequence is that of Neudesin (NENF) from Bos taurus (Bovine).